The following is a 37-amino-acid chain: Large ribosomal subunit protein bL36 (37 aa).

This sequence belongs to the bacterial ribosomal protein bL36 family.

In Desulforapulum autotrophicum (strain ATCC 43914 / DSM 3382 / VKM B-1955 / HRM2) (Desulfobacterium autotrophicum), this protein is Large ribosomal subunit protein bL36.